The sequence spans 292 residues: Ribosomal protein L11 methyltransferase (292 aa).

Residues threonine 144, glycine 165, aspartate 187, and asparagine 229 each coordinate S-adenosyl-L-methionine.

The protein belongs to the methyltransferase superfamily. PrmA family.

The protein resides in the cytoplasm. The enzyme catalyses L-lysyl-[protein] + 3 S-adenosyl-L-methionine = N(6),N(6),N(6)-trimethyl-L-lysyl-[protein] + 3 S-adenosyl-L-homocysteine + 3 H(+). Its function is as follows. Methylates ribosomal protein L11. The sequence is that of Ribosomal protein L11 methyltransferase from Pseudomonas fluorescens (strain ATCC BAA-477 / NRRL B-23932 / Pf-5).